Consider the following 214-residue polypeptide: Adenylate kinase (214 aa).

10–15 (GAGKGT) is a binding site for ATP. The segment at 30 to 59 (STGDMLRAAVKAGTPLGVKAQEIMIQGGLV) is NMP. Residues threonine 31, arginine 36, 57–59 (GLV), 85–88 (GFPR), and glutamine 92 contribute to the AMP site. The interval 126–163 (GRRSCSSCGKGYHLVFDPPLRAGVCDVCGSGLVQRADD) is LID. Position 127 (arginine 127) interacts with ATP. 4 residues coordinate Zn(2+): cysteine 130, cysteine 133, cysteine 150, and cysteine 153. AMP-binding residues include arginine 160 and arginine 171. ATP is bound at residue glycine 199.

This sequence belongs to the adenylate kinase family. In terms of assembly, monomer.

It is found in the cytoplasm. The catalysed reaction is AMP + ATP = 2 ADP. It functions in the pathway purine metabolism; AMP biosynthesis via salvage pathway; AMP from ADP: step 1/1. Its function is as follows. Catalyzes the reversible transfer of the terminal phosphate group between ATP and AMP. Plays an important role in cellular energy homeostasis and in adenine nucleotide metabolism. This Trichlorobacter lovleyi (strain ATCC BAA-1151 / DSM 17278 / SZ) (Geobacter lovleyi) protein is Adenylate kinase.